Reading from the N-terminus, the 568-residue chain is Small ribosomal subunit protein bS1 (568 aa).

S1 motif domains lie at 39–100 (KTVV…LSRE), 118–184 (GEFV…VSRR), 205–273 (GMVL…LGIK), 290–360 (GKQM…LSIK), 377–447 (GTII…LGIK), and 464–533 (GTIV…LSVK).

This sequence belongs to the bacterial ribosomal protein bS1 family.

Functionally, binds mRNA; thus facilitating recognition of the initiation point. It is needed to translate mRNA with a short Shine-Dalgarno (SD) purine-rich sequence. This Rickettsia conorii (strain ATCC VR-613 / Malish 7) protein is Small ribosomal subunit protein bS1 (rpsA).